The sequence spans 62 residues: MACEKPVKVRDPTTGKEVELVPIKVWQLAPRGRKGVKIGLFKSPETGKYFRAKVPDDYPICS.

It belongs to the Cren7 family. In terms of assembly, monomer. Post-translationally, methylated at multiple sites, to varying extents.

Its subcellular location is the chromosome. It localises to the cytoplasm. Functionally, a chromatin protein, binds double-stranded DNA without sequence specificity. Constrains negative DNA supercoils. The polypeptide is Chromatin protein Cren7 2 (cren7-2) (Hyperthermus butylicus (strain DSM 5456 / JCM 9403 / PLM1-5)).